Here is a 344-residue protein sequence, read N- to C-terminus: MTSNFSQATLQLCYENVNASCIKTPYSPGLRVLLYMVFGFGAVLAVCGNLLVVISVLHFKQLHSPANFLIASLASADFLVGISVMPFSMVRSIESCWYFGDTFCSLHSCCDAAFCYSSLFHLCFISVDRYIAVTEPLVYPTKFTMSVSGICISISWILPLVYSSAVFYTGISATGIENLVSALNCVGGCQVAINQDWVLISFLLFFIPTLVMIILYSKIFLVAKQQAVKIETSISGSKGESSLESHKARVAKRERKAAKTLGVTVMAFMVSWLPYTIDTLIDAFMGFITPAYVYEICGWIAYYNSAMNPLIYAFFYPWFRKAIKLILSGKILKGHSSTTSLFSE.

Topologically, residues 1-33 (MTSNFSQATLQLCYENVNASCIKTPYSPGLRVL) are extracellular. N-linked (GlcNAc...) asparagine glycosylation is found at asparagine 4 and asparagine 18. Disulfide bonds link cysteine 21–cysteine 185 and cysteine 104–cysteine 189. Residues 34–54 (LYMVFGFGAVLAVCGNLLVVI) traverse the membrane as a helical segment. Topologically, residues 55 to 67 (SVLHFKQLHSPAN) are cytoplasmic. Residues 68–88 (FLIASLASADFLVGISVMPFS) traverse the membrane as a helical segment. The Extracellular portion of the chain corresponds to 89-102 (MVRSIESCWYFGDT). Residues 103 to 127 (FCSLHSCCDAAFCYSSLFHLCFISV) traverse the membrane as a helical segment. The Cytoplasmic portion of the chain corresponds to 128-146 (DRYIAVTEPLVYPTKFTMS). The chain crosses the membrane as a helical span at residues 147–167 (VSGICISISWILPLVYSSAVF). Residues 168–196 (YTGISATGIENLVSALNCVGGCQVAINQD) lie on the Extracellular side of the membrane. A helical transmembrane segment spans residues 197–217 (WVLISFLLFFIPTLVMIILYS). At 218-256 (KIFLVAKQQAVKIETSISGSKGESSLESHKARVAKRERK) the chain is on the cytoplasmic side. Residues 257–277 (AAKTLGVTVMAFMVSWLPYTI) form a helical membrane-spanning segment. The Extracellular portion of the chain corresponds to 278–295 (DTLIDAFMGFITPAYVYE). The chain crosses the membrane as a helical span at residues 296–319 (ICGWIAYYNSAMNPLIYAFFYPWF). The Cytoplasmic segment spans residues 320 to 344 (RKAIKLILSGKILKGHSSTTSLFSE).

The protein belongs to the G-protein coupled receptor 1 family.

The protein resides in the cell membrane. Its function is as follows. Olfactory receptor activated by trace amines. Trace amine compounds are enriched in animal body fluids and act on trace amine-associated receptors (TAARs) to elicit both intraspecific and interspecific innate behaviors. Ligand-binding causes a conformation change that triggers signaling via G(s)-class of G alpha proteins (GNAL or GNAS). The chain is Trace amine-associated receptor 8b from Rattus norvegicus (Rat).